The following is a 129-amino-acid chain: Large ribosomal subunit protein uL22 (129 aa).

This sequence belongs to the universal ribosomal protein uL22 family. Part of the 50S ribosomal subunit.

Functionally, this protein binds specifically to 23S rRNA; its binding is stimulated by other ribosomal proteins, e.g. L4, L17, and L20. It is important during the early stages of 50S assembly. It makes multiple contacts with different domains of the 23S rRNA in the assembled 50S subunit and ribosome. Its function is as follows. The globular domain of the protein is located near the polypeptide exit tunnel on the outside of the subunit, while an extended beta-hairpin is found that lines the wall of the exit tunnel in the center of the 70S ribosome. The polypeptide is Large ribosomal subunit protein uL22 (Sinorhizobium medicae (strain WSM419) (Ensifer medicae)).